A 156-amino-acid chain; its full sequence is Crossover junction endodeoxyribonuclease RuvC (156 aa).

Active-site residues include Asp-9, Glu-69, and Asp-141. Positions 9, 69, and 141 each coordinate Mg(2+).

This sequence belongs to the RuvC family. As to quaternary structure, homodimer which binds Holliday junction (HJ) DNA. The HJ becomes 2-fold symmetrical on binding to RuvC with unstacked arms; it has a different conformation from HJ DNA in complex with RuvA. In the full resolvosome a probable DNA-RuvA(4)-RuvB(12)-RuvC(2) complex forms which resolves the HJ. Mg(2+) serves as cofactor.

The protein localises to the cytoplasm. It carries out the reaction Endonucleolytic cleavage at a junction such as a reciprocal single-stranded crossover between two homologous DNA duplexes (Holliday junction).. Functionally, the RuvA-RuvB-RuvC complex processes Holliday junction (HJ) DNA during genetic recombination and DNA repair. Endonuclease that resolves HJ intermediates. Cleaves cruciform DNA by making single-stranded nicks across the HJ at symmetrical positions within the homologous arms, yielding a 5'-phosphate and a 3'-hydroxyl group; requires a central core of homology in the junction. The consensus cleavage sequence is 5'-(A/T)TT(C/G)-3'. Cleavage occurs on the 3'-side of the TT dinucleotide at the point of strand exchange. HJ branch migration catalyzed by RuvA-RuvB allows RuvC to scan DNA until it finds its consensus sequence, where it cleaves and resolves the cruciform DNA. This Acaryochloris marina (strain MBIC 11017) protein is Crossover junction endodeoxyribonuclease RuvC.